The primary structure comprises 91 residues: Small ubiquitin-related modifier (91 aa).

The Ubiquitin-like domain maps to E13 to F91. Residue G90 forms a Glycyl lysine isopeptide (Gly-Lys) (interchain with K-? in acceptor proteins) linkage. Residue F91 is a propeptide.

Belongs to the ubiquitin family. SUMO subfamily. In terms of assembly, covalently attached to tbx-2. Covalently attached to lin-1. Covalently attached to lin-11. Covalently attached to sop-2. Covalently attached to bet-1. Post-translationally, cleavage of precursor form by ulp-1 is necessary for function.

The protein localises to the cytoplasm. Its subcellular location is the nucleus. It localises to the cytoskeleton. The protein resides in the spindle. It is found in the chromosome. The protein localises to the microtubule organizing center. Its subcellular location is the centrosome. Its function is as follows. Ubiquitin-like protein which can be covalently attached to target lysines as a monomer. Does not seem to be involved in protein degradation and may function as an antagonist of ubiquitin in the degradation process. Plays a role in a number of cellular processes such as nuclear transport, DNA replication and repair, mitosis and signal transduction. Covalent attachment to its substrates requires prior activation by the E1 complex aos-1-uba-2 and linkage to the E2 enzyme ubc-9, and can be promoted by an E3 ligase such as gei-17. Required for embryonic development, fertility, vulval morphogenesis and inhibition of vulval cell fates. Probably by sumoylating bet-1, prevents muscle myosin depletion in aging adults probably by preventing myoblast growth factor receptor egl-15 overexpression. Plays a role in the attenuation of the let-60/ras pathway. Plays a role in male tail tip morphogenesis. Plays a role in the mitochondrial stress response with its covalent attachment to transcription factors dve-1 and afts-1 negatively regulating the mitochondrial unfolded protein response. In Caenorhabditis elegans, this protein is Small ubiquitin-related modifier.